Here is a 427-residue protein sequence, read N- to C-terminus: Serine hydroxymethyltransferase (427 aa).

Glycine 120–isoleucine 122 is a binding site for (6S)-5,6,7,8-tetrahydrofolate. Lysine 226 is subject to N6-(pyridoxal phosphate)lysine.

The protein belongs to the SHMT family. In terms of assembly, homodimer. The cofactor is pyridoxal 5'-phosphate.

The protein resides in the cytoplasm. The protein operates within amino-acid biosynthesis; glycine biosynthesis; glycine from L-serine: step 1/1. Functionally, catalyzes the reversible interconversion of serine and glycine with a modified folate serving as the one-carbon carrier. Also exhibits a pteridine-independent aldolase activity toward beta-hydroxyamino acids, producing glycine and aldehydes, via a retro-aldol mechanism. The chain is Serine hydroxymethyltransferase from Pyrococcus horikoshii (strain ATCC 700860 / DSM 12428 / JCM 9974 / NBRC 100139 / OT-3).